We begin with the raw amino-acid sequence, 834 residues long: WW domain-containing adapter protein with coiled-coil homolog (834 aa).

Disordered stretches follow at residues 1–247 (MVMH…WSEH), 268–411 (KPKE…SVAT), and 430–504 (VTGA…GAKG). The segment covering 22-31 (HTSYQSSKYS) has biased composition (low complexity). The span at 33–50 (SKRDYERDRSSNYRDRDL) shows a compositional bias: basic and acidic residues. Residues 53-77 (GAGGGGGGGSAGGGGGGSGNGGGPL) show a composition bias toward gly residues. The span at 96-108 (RSHDLRDRSDHRG) shows a compositional bias: basic and acidic residues. The segment covering 109 to 119 (GGGGNGRGGSG) has biased composition (gly residues). 3 stretches are compositionally biased toward basic and acidic residues: residues 127–168 (KMRD…DRRG), 181–246 (SSRE…DWSE), and 268–303 (KPKE…DRFS). The WW domain occupies 244 to 271 (WSEHVSSSGKMYYYNCKTEISQWEKPKE). Polar residues-rich tracts occupy residues 304 to 314 (RSTYKHSNSSR) and 350 to 363 (GDST…YSLS). Residues 369–384 (HGGGPGGGGPGGGGGS) are compositionally biased toward gly residues. 2 stretches are compositionally biased toward low complexity: residues 402-411 (TANSSASVAT) and 431-466 (TGAT…LRNS). Residues 472–496 (GSTSGTTVPTLGSQDPHQHHLNSNA) are compositionally biased toward polar residues.

As to expression, expressed in adult head and thorax and in larval central nervous system and fat body.

The protein resides in the nucleus. It is found in the lysosome. Functionally, acts as a linker between gene transcription and histone H2B monoubiquitination at 'Lys-118'. Regulates the cell-cycle checkpoint activation in response to DNA damage. Positive regulator of amino acid starvation-induced autophagy. Also acts as a negative regulator of basal autophagy. Positively regulates mTor activity. Promotes, in an energy-dependent manner, the assembly of the TTT complex and the RUVBL complex composed of pont and rept into the TTT-RUVBL complex. This leads to dimerization of the mTORC1 complex and its subsequent activation. May negatively regulate the ubiquitin proteasome pathway. Required for habituation, a form of non-associative learning. This Drosophila melanogaster (Fruit fly) protein is WW domain-containing adapter protein with coiled-coil homolog.